The following is a 143-amino-acid chain: Large-conductance mechanosensitive channel (143 aa).

Helical transmembrane passes span 10–30 (FAVK…GAFS) and 89–109 (GSFI…FLMV).

This sequence belongs to the MscL family. In terms of assembly, homopentamer.

The protein resides in the cell inner membrane. In terms of biological role, channel that opens in response to stretch forces in the membrane lipid bilayer. May participate in the regulation of osmotic pressure changes within the cell. The chain is Large-conductance mechanosensitive channel from Burkholderia cenocepacia (strain HI2424).